A 609-amino-acid chain; its full sequence is Hemagglutinin glycoprotein (609 aa).

The Intravirion segment spans residues methionine 1–arginine 34. The helical; Signal-anchor for type II membrane protein transmembrane segment at proline 35 to isoleucine 58 threads the bilayer. Over arginine 59–arginine 609 the chain is Virion surface. N-linked (GlcNAc...) asparagine; by host glycans are attached at residues asparagine 168, asparagine 200, asparagine 215, and asparagine 395.

Belongs to the paramyxoviruses hemagglutinin-neuraminidase family. Non-sialidase subfamily.

It localises to the virion membrane. It is found in the host membrane. Functionally, attaches the virus to cell receptors and thereby initiating infection. Binding of H protein to the receptor induces a conformational change that allows the F protein to trigger virion/cell membranes fusion. Down-regulates human MCP/CD46 cell surface expression. This Rinderpest virus (strain L) (RDV) protein is Hemagglutinin glycoprotein (H).